The primary structure comprises 668 residues: Ubiquitin ligase complex F-box protein UFO1 (668 aa).

The F-box domain maps to 5–51; that stretch reads GLVLQDLPPEILINIFSHLDEKDLFTLQELSTHFRNLIHDEELWKNL. The residue at position 511 (Ser511) is a Phosphoserine. The residue at position 514 (Thr514) is a Phosphothreonine. 3 consecutive UIM domains span residues 547–566, 583–602, and 651–668; these read DEDE…YETQ, EDDE…DERR, and NVDE…SEIN. Residues 564–578 are compositionally biased toward polar residues; that stretch reads ETQTNSSANHGNNTN. Disordered stretches follow at residues 564–585 and 599–639; these read ETQT…DEDD and DERR…TENT.

In terms of assembly, interacts with SKP1. Component of the probable SCF(UFO1) complex containing CDC53, SKP1, RBX1 and UFO1.

The protein operates within protein modification; protein ubiquitination. Functionally, substrate recognition component of a SCF (SKP1-CUL1-F-box protein) E3 ubiquitin-protein ligase complex which mediates the ubiquitination and subsequent proteasomal degradation of target proteins. Probably recognizes and binds to phosphorylated target proteins. This is Ubiquitin ligase complex F-box protein UFO1 (UFO1) from Saccharomyces cerevisiae (strain ATCC 204508 / S288c) (Baker's yeast).